The primary structure comprises 116 residues: Glycine-rich protein 3 short isoform (116 aa).

Positions 1–24 (MASKTLLLLGLFAFLFIVSEMAAA) are cleaved as a signal peptide. Residues 27–83 (VKSESEETVKPEQHGGGFGDNGGGRYQGGGGHGGHGGGGYQGGGGRYQGGGGRQGGG) form a disordered region. The span at 29–39 (SESEETVKPEQ) shows a compositional bias: basic and acidic residues. Residues 40 to 83 (HGGGFGDNGGGRYQGGGGHGGHGGGGYQGGGGRYQGGGGRQGGG) show a composition bias toward gly residues. 5 tandem repeats follow at residues 54-59 (GGGGHG), 62-67 (GGGGYQ), 68-73 (GGGGRY), 75-80 (GGGGRQ), and 81-86 (GGGGSY). Positions 54–86 (GGGGHGGHGGGGYQGGGGRYQGGGGRQGGGGSY) are 5 X 6 AA tandem repeats of G-G-G-G-[HYRS]-[GYQ].

It belongs to the GRP family. Interacts with WAK1 (via the extracellular domain). Component of a 500 kDa complex, composed of GRP3 or GRP3-S, WAK1 and KAPP.

The protein resides in the secreted. It is found in the extracellular space. It localises to the extracellular matrix. Its function is as follows. Regulates the function of the receptor protein kinase WAK1. The protein is Glycine-rich protein 3 short isoform (GRP3S) of Arabidopsis thaliana (Mouse-ear cress).